Reading from the N-terminus, the 234-residue chain is Zein-alpha GZ19AB11 (234 aa).

A signal peptide spans 1-21 (MAAKIFCLLMLLGLSASAATA).

Belongs to the zein family.

Functionally, zeins are major seed storage proteins. The protein is Zein-alpha GZ19AB11 of Zea mays (Maize).